The primary structure comprises 274 residues: 2,3,4,5-tetrahydropyridine-2,6-dicarboxylate N-succinyltransferase (274 aa).

This sequence belongs to the transferase hexapeptide repeat family.

It is found in the cytoplasm. It carries out the reaction (S)-2,3,4,5-tetrahydrodipicolinate + succinyl-CoA + H2O = (S)-2-succinylamino-6-oxoheptanedioate + CoA. The protein operates within amino-acid biosynthesis; L-lysine biosynthesis via DAP pathway; LL-2,6-diaminopimelate from (S)-tetrahydrodipicolinate (succinylase route): step 1/3. This Shigella boydii serotype 18 (strain CDC 3083-94 / BS512) protein is 2,3,4,5-tetrahydropyridine-2,6-dicarboxylate N-succinyltransferase.